A 372-amino-acid chain; its full sequence is Glutamate 5-kinase (372 aa).

Position 14 (Lys-14) interacts with ATP. The substrate site is built by Ser-54, Asp-141, and Asn-153. Residues 173–174 (TD) and 215–221 (TGGMATK) contribute to the ATP site. The 79-residue stretch at 280-358 (KGKLVLDVGA…DEIESLLGYD (79 aa)) folds into the PUA domain.

This sequence belongs to the glutamate 5-kinase family.

The protein localises to the cytoplasm. It carries out the reaction L-glutamate + ATP = L-glutamyl 5-phosphate + ADP. The protein operates within amino-acid biosynthesis; L-proline biosynthesis; L-glutamate 5-semialdehyde from L-glutamate: step 1/2. Functionally, catalyzes the transfer of a phosphate group to glutamate to form L-glutamate 5-phosphate. This is Glutamate 5-kinase from Shewanella woodyi (strain ATCC 51908 / MS32).